Consider the following 67-residue polypeptide: Conotoxin AbVIM (67 aa).

Positions 1–17 are cleaved as a signal peptide; it reads VLIIAVLFLTACQLIAT. The propeptide occupies 18–40; it reads ASYARSERKHPDLRLSSRNSKLS. 3 disulfide bridges follow: Cys-43–Cys-57, Cys-50–Cys-61, and Cys-56–Cys-66.

Belongs to the conotoxin O1 superfamily. In terms of tissue distribution, expressed by the venom duct.

The protein localises to the secreted. This Conus abbreviatus (Abbreviated cone) protein is Conotoxin AbVIM.